The sequence spans 720 residues: MPRDYQTEKEKCKTFLQEFYKDDEIGKKHFKYGVQLANIAHREQVALYIDLDDLAEEDPELVDAICENTRRYTNLFADAVQELLPQYKEREVVHKDALDVYIEHRLMMEQRGRDPNEMRDSQNQYPPELMRRFELYFKAPSSSKARVVRDVKADSIGKLVNIRGIVTRVTEVKPMMVVATYTCDQCGAETYQPIQSPTFMPLIMCPSRECQTNRSGGRLYLQTRGSKFIKFQELKIQEHSDQVPVGNIPRCMSVYVRGENTRLAQPGDHVGITGVFLPMLRTGFRQVVQGLLSETYLECHRLVKMNKSEDDELGTEELSEEELRQITEEDFYEKLAASIAPEIYGHEDVKKALLLLLVGGVDNSPRGMKIRGNINICLMGDPGVAKSQLLSYIDRLAPRSQYTTGRGSSGVGLTAAVMKDPVTGEMTLEGGALVLADQGVCCIDEFDKMMDTDRTAIHEVMEQQTISIAKAGIMTTLNARCSILAAANPAYGRYNPKKTVEQNIQLPAALLSRFDVLWLIQDKPDRDNDLRLAQHITYVHQHSKQPPSQFQPLDMKLMRRYITMCKRKQPAIPEALADYLTAAYVEMRKEARTNKDMTFTSARTLLSVLRLSTALARLRLEDVVEKEDVNEAMRLMEMSKDSLLGDKGHTSRTQRPADVIFSTIREMVPEKGARSVKYSEAEQRCVSKGFTPAQFEAALEEYEELNVWLVNQARTKITFV.

The C4-type zinc-finger motif lies at 183-210; it reads CDQCGAETYQPIQSPTFMPLIMCPSREC. Residues 331 to 537 enclose the MCM domain; the sequence is FYEKLAASIA…NDLRLAQHIT (207 aa). ATP contacts are provided by tyrosine 344, glycine 383, alanine 385, lysine 386, serine 387, asparagine 488, arginine 513, and arginine 603. An Arginine finger motif is present at residues 512–515; that stretch reads SRFD.

This sequence belongs to the MCM family. In terms of assembly, component of the mcm2-7 complex (RLF-M). The complex forms a toroidal hexameric ring with the proposed subunit order mcm2-mcm6-mcm4-mcm7-mcm3-mcm5. The heterodimer of mmcm3/mcm5 interacts with mcm4, mmcm6, mcm7 and weakly with mcm2. The N-terminus is required for interaction with mmcm3, though this interaction may not be direct, and remains in a complex with mmcm3 throughout the cell cycle. Begins to associate with zmcm6 at the neurula stage. Component of the replisome complex. Component of the CMG helicase complex, composed of the mcm2-7 complex, the GINS complex and cdc45. Ubiquitinated by traip when forks converge following formation of DNA interstrand cross-links. Ubiquitinated via 'Lys-6'- and 'Lys-63'-linked polyubiquitination by traip. Short ubiquitin chains on mcm7 promote recruitment of DNA glycosylase neil3. If the interstrand cross-link cannot be cleaved by neil3, the ubiquitin chains continue to grow on mcm7, promoting the unloading of the CMG helicase complex by the vcp/p97 ATPase.

It localises to the nucleus. Its subcellular location is the chromosome. The catalysed reaction is ATP + H2O = ADP + phosphate + H(+). In terms of biological role, acts as a component of the mcm2-7 complex (mcm complex) which is the putative replicative helicase essential for 'once per cell cycle' DNA replication initiation and elongation in eukaryotic cells. The active ATPase sites in the mcm2-7 ring are formed through the interaction surfaces of two neighboring subunits such that a critical structure of a conserved arginine finger motif is provided in trans relative to the ATP-binding site of the Walker A box of the adjacent subunit. The six ATPase active sites, however, are likely to contribute differentially to the complex helicase activity. The existence of maternal and zygotic forms of mcm3 and mcm6 suggests that specific forms of mcm2-7 complexes may be used during different stages of development. The protein is DNA replication licensing factor mcm7-A (mcm7-a) of Xenopus laevis (African clawed frog).